A 235-amino-acid polypeptide reads, in one-letter code: Leucyl/phenylalanyl-tRNA--protein transferase (235 aa).

Belongs to the L/F-transferase family.

It is found in the cytoplasm. It catalyses the reaction N-terminal L-lysyl-[protein] + L-leucyl-tRNA(Leu) = N-terminal L-leucyl-L-lysyl-[protein] + tRNA(Leu) + H(+). The enzyme catalyses N-terminal L-arginyl-[protein] + L-leucyl-tRNA(Leu) = N-terminal L-leucyl-L-arginyl-[protein] + tRNA(Leu) + H(+). The catalysed reaction is L-phenylalanyl-tRNA(Phe) + an N-terminal L-alpha-aminoacyl-[protein] = an N-terminal L-phenylalanyl-L-alpha-aminoacyl-[protein] + tRNA(Phe). Functionally, functions in the N-end rule pathway of protein degradation where it conjugates Leu, Phe and, less efficiently, Met from aminoacyl-tRNAs to the N-termini of proteins containing an N-terminal arginine or lysine. This Aeromonas hydrophila subsp. hydrophila (strain ATCC 7966 / DSM 30187 / BCRC 13018 / CCUG 14551 / JCM 1027 / KCTC 2358 / NCIMB 9240 / NCTC 8049) protein is Leucyl/phenylalanyl-tRNA--protein transferase.